Reading from the N-terminus, the 461-residue chain is Anthranilate synthase component 1 (461 aa).

Residues Ser-43 and 238 to 240 (PYM) each bind L-tryptophan. 273-274 (GT) provides a ligand contact to chorismate. Glu-300 contributes to the Mg(2+) binding site. Chorismate contacts are provided by residues Tyr-388, Arg-408, 422 to 424 (GAG), and Gly-424. Mg(2+) is bound at residue Glu-437.

Belongs to the anthranilate synthase component I family. Heterotetramer consisting of two non-identical subunits: a beta subunit (TrpG) and a large alpha subunit (TrpE). It depends on Mg(2+) as a cofactor.

It catalyses the reaction chorismate + L-glutamine = anthranilate + pyruvate + L-glutamate + H(+). The protein operates within amino-acid biosynthesis; L-tryptophan biosynthesis; L-tryptophan from chorismate: step 1/5. Its activity is regulated as follows. Feedback inhibited by tryptophan. In terms of biological role, part of a heterotetrameric complex that catalyzes the two-step biosynthesis of anthranilate, an intermediate in the biosynthesis of L-tryptophan. In the first step, the glutamine-binding beta subunit (TrpG) of anthranilate synthase (AS) provides the glutamine amidotransferase activity which generates ammonia as a substrate that, along with chorismate, is used in the second step, catalyzed by the large alpha subunit of AS (TrpE) to produce anthranilate. In the absence of TrpG, TrpE can synthesize anthranilate directly from chorismate and high concentrations of ammonia. In Methanothermobacter marburgensis (strain ATCC BAA-927 / DSM 2133 / JCM 14651 / NBRC 100331 / OCM 82 / Marburg) (Methanobacterium thermoautotrophicum), this protein is Anthranilate synthase component 1 (trpE).